A 530-amino-acid polypeptide reads, in one-letter code: PC4 and SFRS1-interacting protein (530 aa).

Residues 1-64 enclose the PWWP domain; it reads MTRDFKPGDL…PKDIFPYSEN (64 aa). Lys75 is covalently cross-linked (Glycyl lysine isopeptide (Lys-Gly) (interchain with G-Cter in SUMO2)). Residues 88-349 are disordered; the sequence is PKVKFSSQQA…VEKKRETSMD (262 aa). The span at 93-107 shows a compositional bias: low complexity; sequence SSQQASAKQSNASSD. A phosphoserine mark is found at Ser102, Ser105, and Ser106. The span at 113–135 shows a compositional bias: basic and acidic residues; sequence KETSVSKEDTDPEEKASNEDVTK. Phosphothreonine occurs at positions 115 and 122. Ser129 is modified (phosphoserine). Position 141 is a phosphothreonine (Thr141). Positions 144-153 are enriched in basic residues; sequence AARRGRKRKA. Positions 146 to 156 match the Nuclear localization signal motif; that stretch reads RRGRKRKAEKQ. Thr167 is subject to Phosphothreonine. Phosphoserine occurs at positions 177 and 206. The segment covering 213–261 has biased composition (basic and acidic residues); sequence EEDKSKKKGQEEKQPKKQLKKDEEGQKEEEKPRKEPDKKEGKKEVESKR. A Phosphoserine modification is found at Ser271. At Thr272 the chain carries Phosphothreonine. Phosphoserine is present on residues Ser273 and Ser275. Positions 274 to 283 are enriched in acidic residues; that stretch reads DSEEEGDDQE. Residues 287–302 show a composition bias toward basic residues; the sequence is KRKGGRNFQTAHRRNM. The segment covering 305–349 has biased composition (basic and acidic residues); that stretch reads GQHEKEAADRKRKQEEQMETEQQNKDEGKKPEVKKVEKKRETSMD. Coiled-coil stretches lie at residues 306–334 and 371–395; these read QHEK…EGKK and NRCI…KHTE. Positions 340 to 417 are integrase-binding domain (IBD); the sequence is VEKKRETSMD…VSQVIMEKST (78 aa). Phosphoserine is present on Ser434. At Thr437 the chain carries Phosphothreonine. A Phosphoserine modification is found at Ser443. Positions 446 to 473 are enriched in basic and acidic residues; the sequence is EQRQHEEANKTKDQGKKGPNKKLEKEQT. The interval 446–530 is disordered; that stretch reads EQRQHEEANK…ISLKDSTLDN (85 aa). Positions 474–494 are enriched in polar residues; that stretch reads GSKTLNGGSDAQDSNQPQHNG. A compositionally biased stretch (basic and acidic residues) spans 498 to 530; it reads EESKDNHEASSKKKPSSEERETEISLKDSTLDN. The residue at position 514 (Ser514) is a Phosphoserine. Arg517 bears the Citrulline mark. Residue Ser522 is modified to Phosphoserine. Position 527 is a phosphothreonine (Thr527).

Belongs to the HDGF family. As to quaternary structure, monomer. Interacts with IFRD1/PC4. Interacts (via IBD domain) with POGZ (via IBM motif) and CDCA7L (via IBM motifs). Interacts (via IBD domain) with KMT2A (via IBM motifs) with a moderate affinity whereas interacts with the KMT2A-MEN1 complex with a greater affinity; MEN1 enhances interaction of KMT2A with PSIP1. Interacts (via IBD domain) with IWS1 (via IBM motif), MED1 (via IBM motif) and DBF4 (via IBM motifs). Citrullinated by PADI4.

It is found in the nucleus. Its function is as follows. Transcriptional coactivator involved in neuroepithelial stem cell differentiation and neurogenesis. Involved in particular in lens epithelial cell gene regulation and stress responses. May play an important role in lens epithelial to fiber cell terminal differentiation. May play a protective role during stress-induced apoptosis. This is PC4 and SFRS1-interacting protein (PSIP1) from Bos taurus (Bovine).